The chain runs to 282 residues: Small ribosomal subunit protein uS2 (282 aa).

The tract at residues A245–S265 is disordered.

It belongs to the universal ribosomal protein uS2 family.

This Chlamydia trachomatis serovar A (strain ATCC VR-571B / DSM 19440 / HAR-13) protein is Small ribosomal subunit protein uS2.